We begin with the raw amino-acid sequence, 363 residues long: NudC domain-containing protein 3 (363 aa).

The interval 120–143 (AADLSGPQEVEKEEPPGSQDPEHT) is disordered. Residues 128–143 (EVEKEEPPGSQDPEHT) are compositionally biased toward basic and acidic residues. The CS domain occupies 187 to 279 (AIRENYIWSQ…VGEYWWSAIL (93 aa)). Ser342 and Ser357 each carry phosphoserine.

This Mus musculus (Mouse) protein is NudC domain-containing protein 3 (Nudcd3).